Consider the following 41-residue polypeptide: Submaxillary gland androgen-regulated protein 2, isoform beta (41 aa).

Residues 1–22 form the signal peptide; the sequence is MKALYMVFVLWVLIGCFLRLLK.

It localises to the secreted. May play a role in protection or detoxification. The protein is Submaxillary gland androgen-regulated protein 2, isoform beta (Smr2) of Mus musculus (Mouse).